Reading from the N-terminus, the 60-residue chain is Large ribosomal subunit protein bL32 (60 aa).

It belongs to the bacterial ribosomal protein bL32 family.

The sequence is that of Large ribosomal subunit protein bL32 from Clostridium novyi (strain NT).